The sequence spans 689 residues: Glycine--tRNA ligase beta subunit (689 aa).

The protein belongs to the class-II aminoacyl-tRNA synthetase family. In terms of assembly, tetramer of two alpha and two beta subunits.

Its subcellular location is the cytoplasm. It carries out the reaction tRNA(Gly) + glycine + ATP = glycyl-tRNA(Gly) + AMP + diphosphate. This chain is Glycine--tRNA ligase beta subunit, found in Escherichia coli O7:K1 (strain IAI39 / ExPEC).